Consider the following 418-residue polypeptide: L-rhamnose isomerase (418 aa).

The Mn(2+) site is built by histidine 262, aspartate 294, and aspartate 296.

Belongs to the rhamnose isomerase family. As to quaternary structure, homotetramer. Mn(2+) is required as a cofactor.

The protein resides in the cytoplasm. It carries out the reaction L-rhamnopyranose = L-rhamnulose. It participates in carbohydrate degradation; L-rhamnose degradation; glycerone phosphate from L-rhamnose: step 1/3. Catalyzes the interconversion of L-rhamnose and L-rhamnulose. This is L-rhamnose isomerase from Yersinia pseudotuberculosis serotype IB (strain PB1/+).